A 193-amino-acid polypeptide reads, in one-letter code: Protein TEX261 (193 aa).

A run of 5 helical transmembrane segments spans residues 1 to 21, 39 to 59, 67 to 87, 94 to 114, and 122 to 142; these read MVGV…PPPA, SRII…LYVF, IGVG…FPFI, FILS…FFAE, and VLAY…VSLS.

The protein belongs to the SVP26 family.

It is found in the membrane. The protein is Protein TEX261 (TEX261) of Bos taurus (Bovine).